We begin with the raw amino-acid sequence, 444 residues long: Probable D-serine dehydratase (444 aa).

Lys118 is modified (N6-(pyridoxal phosphate)lysine).

It belongs to the serine/threonine dehydratase family. DsdA subfamily. The cofactor is pyridoxal 5'-phosphate.

The enzyme catalyses D-serine = pyruvate + NH4(+). In Desulfitobacterium hafniense (strain Y51), this protein is Probable D-serine dehydratase.